Here is a 316-residue protein sequence, read N- to C-terminus: Pentatricopeptide repeat-containing protein At1g19525 (316 aa).

PPR repeat units lie at residues Asp9 to Pro43, Asp44 to Ala78, Ser79 to Pro113, Ser115 to Pro149, Asp150 to Ile184, and Gly185 to Pro219.

It belongs to the PPR family. P subfamily.

The protein is Pentatricopeptide repeat-containing protein At1g19525 of Arabidopsis thaliana (Mouse-ear cress).